The sequence spans 2310 residues: MGFLRQIQLLLWKNWTLRKRQKIRFVVELVWPLSLFLVLIWLRNANPLYSQHECHFPNKAMPSAGLLPWLQGIFCNMNNPCFQNPTPGESPGTVSNYNNSILARVYRDFQELFMDTPEVQHLGQVWAELRTLSQFMDTLRTHPERFAGRGLQIRDILKDEEALTLFLMRNIGLSDSVAHLLVNSQVRVEQFAYGVPDLELTDIACSEALLQRFIIFSQRRGAQTVRDALCPLSQVTLQWIEDTLYADVDFFKLFHVLPTLLDSSSQGINLRFWGGILSDLSPRMQKFIHRPSVQDLLWVSRPLLQNGGPETFTQLMSILSDLLCGYPEGGGSRVFSFNWYEDNNYKAFLGIDSTRKDPAYSYDKRTTSFCNSLIQSLESNPLTKIAWRAAKPLLMGKILFTPDSPAARRIMKNANSTFEELDRVRKLVKAWEEVGPQIWYFFEKSTQMTVIRDTLQHPTVKDFINRQLGEEGITTEAVLNFFSNGPQEKQADDMTSFDWRDIFNITDRFLRLANQYLECLVLDKFESYDDEVQLTQRALSLLEENRFWAGVVFPGMYPWASSLPPHVKYKIRMDIDVVEKTNKIKDRYWDSGPRADPVEDFRYIWGGFAYLQDMVEQGIVKSQMQAEPPIGVYLQQMPYPCFVDDSFMIILNRCFPIFMVLAWIYSVSMTVKGIVLEKELRLKETLKNQGVSNAVIWCTWFLDSFSIMALSIFLLTLFIMHGRILHYSDPFILFLFLLAFATATIMQSFLLSTLFSKASLAAACSGVIYFTLYLPHVLCFAWQDRMTADLKTTVSLLSSVAFGFGTEYLVRFEEQGLGLQWSNIGKSPLEGDEFSFLLSMKMMLLDAALYGLLAWYLDQVFPGDYGTPLPWYFLLQESYWLGGEGCSTREERALEKTEPLTEEMEDPEHPEGMNDSFFERELPGLVPGVCVKNLVKVFEPSGRPAVDRLNITFYENQITAFLGHNGAGKTTTLSILTGLLPPTSGTVLIGGKDIETNLDVVRQSLGMCPQHNILFHHLTVAEHILFYAQLKGRSWEEAQLEMEAMLEDTGLHHKRNEEAQDLSGGMQRKLSVAIAFVGDSKVVVLDEPTSGVDPYSRRSIWDLLLKYRSGRTIIMSTHHMDEADLLGDRIAIISQGRLYCSGTPLFLKNCFGTGFYLTLVRKMKNIQSQRGGCEGVCSCTSKGFSTRCPTRVDEITEEQVLDGDVQELMDLVYHHVPEAKLVECIGQELIFLLPNKNFKQRAYASLFRELEETLADLGLSSFGISDTPLEEIFLKVTEDAGAGSMFVGGAQQKREQAGLRHPCSAPTEKLRQYAQAPHTCSPGQVDPPKGQPSPEPEDPGVPFNTGARLILQHVQALLVKRFHHTIRSRKDFVAQIVLPATFVFLALMLSIIVPPFGEFPALTLHPWMYGHQYTFFSMDEPNNEHLEVLADVLLNRPGFGNRCLKEEWLPEYPCINATSWKTPSVSPNITHLFQKQKWTAAHPSPSCKCSTREKLTMLPECPEGAGGLPPPQRTQRSTEVLQDLTNRNISDYLVKTYPALIRSSLKSKFWVNEQRYGGISIGGKLPAIPISGEALVGFLSGLGQMMNVSGGPVTREASKEMLDFLKHLETTDNIKVWFNNKGWHALVSFLNVAHNAILRASLPRDRDPEEYGITVISQPLNLTKEQLSDITVLTTSVDAVVAICVIFAMSFVPASFVLYLIQERVTKAKHLQFISGVSPTTYWLTNFLWDIMNYAVSAGLVVGIFIGFQKKAYTSPDNLPALVSLLMLYGWAVIPMMYPASFLFEVPSTAYVALSCANLFIGINSSAITFVLELFENNRTLLRFNAMLRKLLIVFPHFCLGRGLIDLALSQAVTDVYAQFGEEYSANPFQWDLIGKNLVAMAIEGVVYFLLTLLIQHHFFLTRWIAEPAREPVFDEDDDVAEERQRVMSGGNKTDILKLNELTKVYSGSSSPAVDRLCVGVRPGECFGLLGVNGAGKTTTFKMLTGDTTVTSGDATVAGKSILTSISDVHQNMGYCPQFDAIDDLLTGREHLYLYARLRGVPSKEIEKVANWGIQSLGLSLYADRLAGTYSGGNKRKLSTAIALTGCPPLLLLDEPTTGMDPQARRMLWNTIVSIIREGRAVVLTSHSMEECEALCTRLAIMVKGTFQCLGTIQHLKYKFGDGYIVTMKIKSPKDDLLPDLNPVEQFFQGNFPGSVQRERHHSMLQFQVPSSSLARIFQLLISHKDSLLIEEYSVTQTTLDQVFVNFAKQQTETYDLPLHPRAAGASWQAKLEEKSGRLQTQEPLPAGSEQLANGSNPTAAEDKHTRSPQ.

Residues 1 to 21 are Cytoplasmic-facing; sequence MGFLRQIQLLLWKNWTLRKRQ. Residues 22 to 42 traverse the membrane as a helical segment; sequence KIRFVVELVWPLSLFLVLIWL. Residues 43-646 lie on the Extracellular side of the membrane; that stretch reads RNANPLYSQH…MPYPCFVDDS (604 aa). Intrachain disulfides connect Cys-54–Cys-81 and Cys-75–Cys-324. Asn-98 is a glycosylation site (N-linked (GlcNAc...) asparagine). Mg(2+)-binding residues include Ser-336 and Asn-338. Cys-370 and Cys-519 form a disulfide bridge. N-linked (GlcNAc...) asparagine glycans are attached at residues Asn-415 and Asn-504. An N-all-trans-retinylidenephosphatidylethanolamine is bound by residues Arg-587 and Arg-653. Cystine bridges form between Cys-641-Cys-1489, Cys-1443-Cys-1454, and Cys-1487-Cys-1501. A helical membrane pass occupies residues 647 to 667; the sequence is FMIILNRCFPIFMVLAWIYSV. At 668–699 the chain is on the cytoplasmic side; it reads SMTVKGIVLEKELRLKETLKNQGVSNAVIWCT. A helical membrane pass occupies residues 700–720; that stretch reads WFLDSFSIMALSIFLLTLFIM. The Extracellular segment spans residues 721-730; that stretch reads HGRILHYSDP. A helical membrane pass occupies residues 731-751; it reads FILFLFLLAFATATIMQSFLL. At 752-759 the chain is on the cytoplasmic side; it reads STLFSKAS. A helical membrane pass occupies residues 760–780; sequence LAAACSGVIYFTLYLPHVLCF. Over 781–835 the chain is Extracellular; that stretch reads AWQDRMTADLKTTVSLLSSVAFGFGTEYLVRFEEQGLGLQWSNIGKSPLEGDEFS. Residues 836–856 traverse the membrane as a helical segment; that stretch reads FLLSMKMMLLDAALYGLLAWY. Residues 857 to 1375 are Cytoplasmic-facing; it reads LDQVFPGDYG…IRSRKDFVAQ (519 aa). Positions 891 to 910 are disordered; the sequence is ERALEKTEPLTEEMEDPEHP. A Phosphothreonine modification is found at Thr-901. Residues 929–1160 form the ABC transporter 1 domain; the sequence is VCVKNLVKVF…FGTGFYLTLV (232 aa). ATP-binding residues include Phe-938, Gly-966, and Lys-969. Thr-970 provides a ligand contact to Mg(2+). ATP contacts are provided by Thr-971, Gln-1010, Lys-1054, Gly-1064, Gly-1065, and His-1118. Phosphoserine is present on Ser-1185. The segment at 1311–1344 is disordered; the sequence is RQYAQAPHTCSPGQVDPPKGQPSPEPEDPGVPFN. A helical membrane pass occupies residues 1376–1396; sequence IVLPATFVFLALMLSIIVPPF. Over 1397-1726 the chain is Extracellular; it reads GEFPALTLHP…VSPTTYWLTN (330 aa). Asn-1468 carries an N-linked (GlcNAc...) asparagine glycan. Residues Asn-1528, Asn-1587, and Asn-1661 are each glycosylated (N-linked (GlcNAc...) asparagine). Residues 1727–1747 form a helical membrane-spanning segment; that stretch reads FLWDIMNYAVSAGLVVGIFIG. The Cytoplasmic portion of the chain corresponds to 1748–1758; the sequence is FQKKAYTSPDN. A helical transmembrane segment spans residues 1759 to 1779; sequence LPALVSLLMLYGWAVIPMMYP. Residues 1780–1791 lie on the Extracellular side of the membrane; the sequence is ASFLFEVPSTAY. A helical transmembrane segment spans residues 1792–1812; it reads VALSCANLFIGINSSAITFVL. The Cytoplasmic segment spans residues 1813-1830; it reads ELFENNRTLLRFNAMLRK. The chain crosses the membrane as a helical span at residues 1831–1851; it reads LLIVFPHFCLGRGLIDLALSQ. At 1852–1872 the chain is on the extracellular side; the sequence is AVTDVYAQFGEEYSANPFQWD. A helical membrane pass occupies residues 1873-1893; the sequence is LIGKNLVAMAIEGVVYFLLTL. Over 1894 to 2310 the chain is Cytoplasmic; sequence LIQHHFFLTR…AEDKHTRSPQ (417 aa). An ABC transporter 2 domain is found at 1937–2169; the sequence is LKLNELTKVY…FGDGYIVTMK (233 aa). Residues Asn-1973, Gly-1974, Lys-1977, Thr-1978, Thr-1979, and Gly-2072 each contribute to the ATP site. Residue Thr-1978 coordinates Mg(2+). The tract at residues 2243 to 2248 is essential for ATP binding and ATPase activity; it reads VFVNFA. The disordered stretch occupies residues 2266 to 2310; that stretch reads ASWQAKLEEKSGRLQTQEPLPAGSEQLANGSNPTAAEDKHTRSPQ. Positions 2301-2310 are enriched in basic and acidic residues; that stretch reads AEDKHTRSPQ.

The protein belongs to the ABC transporter superfamily. ABCA family. Post-translationally, N-glycosylated. Proteolytic cleavage by trypsin leads to a 120-kDa N-terminal fragment and a 115-kDa C-terminal fragment that are linked through disulfide bonds. In terms of processing, phosphorylation is independent of light exposure and modulates ATPase activity. As to expression, retinal-specific. Seems to be exclusively found in the rims of rod photoreceptor cells.

It is found in the membrane. It localises to the endoplasmic reticulum. The protein resides in the cell projection. Its subcellular location is the cilium. The protein localises to the photoreceptor outer segment. It carries out the reaction an N-all-trans-retinylidenephosphatidylethanolamine(out) + ATP + H2O = an N-all-trans-retinylidenephosphatidylethanolamine(in) + ADP + phosphate + H(+). The catalysed reaction is ATP + H2O + phospholipidSide 1 = ADP + phosphate + phospholipidSide 2.. The enzyme catalyses a 1,2-diacyl-sn-glycero-3-phosphoethanolamine(out) + ATP + H2O = a 1,2-diacyl-sn-glycero-3-phosphoethanolamine(in) + ADP + phosphate + H(+). It catalyses the reaction N-11-cis-retinylidenephosphatidylethanolamine(out) + ATP + H2O = N-11-cis-retinylidenephosphatidylethanolamine(in) + ADP + phosphate + H(+). It carries out the reaction ATP + H2O = ADP + phosphate + H(+). ATPase activity is decreased by cholesterol and ceramide. Phospholipids translocase activity is highly reduced by berylium fluoride and aluminum floride. N-ethylmaleimide inhibits phospholipid translocase activity. In terms of biological role, flippase that catalyzes in an ATP-dependent manner the transport of retinal-phosphatidylethanolamine conjugates like the 11-cis and all-trans isomers of N-retinylidene-phosphatidylethanolamine from the lumen to the cytoplasmic leaflet of photoreceptor outer segment disk membranes, where N-cis-retinylidene-phosphatidylethanolamine (N-cis-R-PE) is then isomerized to its all-trans isomer (N-trans-R-PE) and reduced by RDH8 to produce all-trans-retinol (all-trans-rol) and therefore prevents the accumulation of excess of 11-cis-retinal and its schiff-base conjugate and the formation of toxic bisretinoid. Displays ATPase activity in vitro in absence of retinal substrate. May display GTPase activity that is strongly influenced by the lipid environment and the presence of retinoid compounds. Binds the unprotonated form of N-retinylidene-phosphatidylethanolamine with high affinity in the absence of ATP and ATP binding and hydrolysis induce a protein conformational change that causes the dissociation of N-retinylidene-phosphatidylethanolamine. In Mus musculus (Mouse), this protein is Retinal-specific phospholipid-transporting ATPase ABCA4.